The primary structure comprises 140 residues: Endoribonuclease YbeY (140 aa).

Zn(2+) contacts are provided by H100, H104, and H110.

This sequence belongs to the endoribonuclease YbeY family. The cofactor is Zn(2+).

The protein localises to the cytoplasm. Its function is as follows. Single strand-specific metallo-endoribonuclease involved in late-stage 70S ribosome quality control and in maturation of the 3' terminus of the 16S rRNA. The polypeptide is Endoribonuclease YbeY (Helicobacter pylori (strain ATCC 700392 / 26695) (Campylobacter pylori)).